We begin with the raw amino-acid sequence, 487 residues long: Anthocyanidin 3-O-glucosyltransferase 5 (487 aa).

Histidine 22 acts as the Proton acceptor in catalysis. Residue histidine 22 coordinates an anthocyanidin. Residue aspartate 119 is the Charge relay of the active site. UDP-alpha-D-glucose-binding residues include glutamine 354, histidine 369, tryptophan 372, asparagine 373, serine 374, and glutamate 377. An an anthocyanidin-binding site is contributed by alanine 392. Residues glutamate 393 and glutamine 394 each contribute to the UDP-alpha-D-glucose site.

Belongs to the UDP-glycosyltransferase family. In terms of tissue distribution, faintly expressed in cotyledons.

It carries out the reaction an anthocyanidin + UDP-alpha-D-glucose + H(+) = an anthocyanidin 3-O-beta-D-glucoside + UDP. Its pathway is pigment biosynthesis; anthocyanin biosynthesis. In terms of biological role, in the presence of other necessary color factors, this glycosylation reaction allows the accumulation of anthocyanin pigments. The chain is Anthocyanidin 3-O-glucosyltransferase 5 (GT5) from Manihot esculenta (Cassava).